Consider the following 388-residue polypeptide: Carbohydrate sulfotransferase 4 (388 aa).

At M1–G7 the chain is on the cytoplasmic side. The helical; Signal-anchor for type II membrane protein transmembrane segment at R8 to V28 threads the bilayer. At H29–G388 the chain is on the lumenal side. 3'-phosphoadenylyl sulfate-binding positions include W50–F56 and R204–S212. N-linked (GlcNAc...) asparagine glycosylation is found at N307, N328, and N369.

This sequence belongs to the sulfotransferase 1 family. Gal/GlcNAc/GalNAc subfamily. In terms of assembly, monomer. In terms of tissue distribution, specifically expressed in high endothelial venules (HEV) of peripheral lymph nodes.

Its subcellular location is the golgi apparatus membrane. The catalysed reaction is 3-O-{N-acetyl-beta-D-glucosaminyl-(1-&gt;3)-beta-D-galactosyl-(1-&gt;3)-N-acetyl-alpha-D-galactosaminyl}-L-threonyl-[protein] + 3'-phosphoadenylyl sulfate = 3-O-{6-O-sulfo-N-acetyl-beta-D-glucosaminyl-(1-&gt;3)-beta-D-galactosyl-(1-&gt;3)-N-acetyl-alpha-D-galactosaminyl}-L-threonyl-[protein] + adenosine 3',5'-bisphosphate + H(+). It catalyses the reaction 3-O-{N-acetyl-beta-D-glucosaminyl-(1-&gt;3)-beta-D-galactosyl-(1-&gt;3)-N-acetyl-alpha-D-galactosaminyl}-L-seryl-[protein] + 3'-phosphoadenylyl sulfate = 3-O-{6-O-sulfo-N-acetyl-beta-D-glucosaminyl-(1-&gt;3)-beta-D-galactosyl-(1-&gt;3)-N-acetyl-alpha-D-galactosaminyl}-L-seryl-[protein] + adenosine 3',5'-bisphosphate + H(+). The enzyme catalyses a 3-O-{beta-D-galactosyl-(1-&gt;3)-[N-acetyl-beta-D-glucosaminyl-(1-&gt;6)]-N-acetyl-alpha-D-galactosaminyl}-L-threonyl-[protein] + 3'-phosphoadenylyl sulfate = 3-O-{beta-D-galactosyl-(1-&gt;3)-[6-O-sulfo-N-acetyl-beta-D-glucosaminyl-(1-&gt;6)]-N-acetyl-alpha-D-galactosaminyl}-L-threonyl-[protein] + adenosine 3',5'-bisphosphate + H(+). It carries out the reaction 3-O-{beta-D-galactosyl-(1-&gt;3)-[N-acetyl-beta-D-glucosaminyl-(1-&gt;6)]-N-acetyl-alpha-D-galactosaminyl}-L-seryl-[protein] + 3'-phosphoadenylyl sulfate = 3-O-{beta-D-galactosyl-(1-&gt;3)-[6-O-sulfo-N-acetyl-beta-D-glucosaminyl-(1-&gt;6)]-N-acetyl-alpha-D-galactosaminyl}-L-seryl-[protein] + adenosine 3',5'-bisphosphate + H(+). The protein operates within protein modification; carbohydrate sulfation. Functionally, sulfotransferase involved in SELL/L-selectin ligand biosynthesis pathway. Catalyzes the transfer of the sulfate group from 3'-phospho-5'-adenylyl sulfate (PAPS) onto the hydroxyl group at C-6 position of the non-reducing N-acetylglucosamine (GlcNAc) residue within O-linked mucin-type glycans. Contributes to generate sialyl 6-sulfo Lewis X determinant (also known as MECA-79 epitope) for SELL recognition, a prerequisite for continuous lymphocyte homing into peripheral lymph nodes and antigen immune surveillance. Transfers the sulfate group primarily on core 2 GlcNAcbeta1-6(Galbeta1-3)GalNAcalphaSer/Thr and extended core 1 GlcNAcbeta1-3Galbeta1-3GalNAcalphaSer/Thr based O-linked glycans on CD34 and GLYCAM1 peripheral node addressins (PNAds) expressed on the lumenal side of high endothelial venules (HEVs). The recognition of PNAds by SELL initiates a multistep process comprising tethering and rolling of blood lymphocytes on HEVs against the blood flow, followed by chemokine signaling, integrin-mediated lymphocyte adhesion onto endothelial cells and lymphocyte transendothelial migration. Modulates rolling velocity and differential T and B lymphocyte recruitment into peripheral lymph nodes, with a major role in B lymphocyte homing. Might be redundant in sulfation of MADCAM1 and lymphocyte trafficking to mesenteric lymph nodes. Can also sulfonate core 3 GlcNAcbeta1-3GalNAc-R based glycans as well as GlcNAcbeta1-3Galbeta1-Glc, GlcNAcbeta1-6ManOMe and GlcNAcbeta1-2Man oligosaccharides, which might be ectopically expressed during tumorigenesis. In Mus musculus (Mouse), this protein is Carbohydrate sulfotransferase 4 (Chst4).